The following is a 210-amino-acid chain: Ribonuclease HII (210 aa).

The 193-residue stretch at 18–210 (GLIAGVDEVG…FKPVKALLGL (193 aa)) folds into the RNase H type-2 domain. Residues aspartate 24, glutamate 25, and aspartate 116 each contribute to the a divalent metal cation site.

This sequence belongs to the RNase HII family. It depends on Mn(2+) as a cofactor. Requires Mg(2+) as cofactor.

The protein localises to the cytoplasm. It catalyses the reaction Endonucleolytic cleavage to 5'-phosphomonoester.. Its function is as follows. Endonuclease that specifically degrades the RNA of RNA-DNA hybrids. The polypeptide is Ribonuclease HII (Shewanella baltica (strain OS155 / ATCC BAA-1091)).